The primary structure comprises 100 residues: NADH-quinone oxidoreductase subunit K (100 aa).

Helical transmembrane passes span 2–22 (ISLNHYLLLCVILFCIGLFGI), 28–48 (ILMLFFSTEILLNAINIGFVA), and 63–83 (LFIIAIAASEIAVGLGLVVIW).

It belongs to the complex I subunit 4L family. In terms of assembly, NDH-1 is composed of 14 different subunits. Subunits NuoA, H, J, K, L, M, N constitute the membrane sector of the complex.

It localises to the cell inner membrane. The enzyme catalyses a quinone + NADH + 5 H(+)(in) = a quinol + NAD(+) + 4 H(+)(out). Functionally, NDH-1 shuttles electrons from NADH, via FMN and iron-sulfur (Fe-S) centers, to quinones in the respiratory chain. The immediate electron acceptor for the enzyme in this species is believed to be ubiquinone. Couples the redox reaction to proton translocation (for every two electrons transferred, four hydrogen ions are translocated across the cytoplasmic membrane), and thus conserves the redox energy in a proton gradient. The sequence is that of NADH-quinone oxidoreductase subunit K from Helicobacter hepaticus (strain ATCC 51449 / 3B1).